Here is a 184-residue protein sequence, read N- to C-terminus: GMP synthase [glutamine-hydrolyzing] subunit A (184 aa).

The Glutamine amidotransferase type-1 domain maps to 3–184; it reads PICVVNNYGQ…YENFDAICTE (182 aa). The Nucleophile role is filled by Cys-75. Active-site residues include His-162 and Glu-164.

Heterodimer composed of a glutamine amidotransferase subunit (A) and a GMP-binding subunit (B).

The catalysed reaction is XMP + L-glutamine + ATP + H2O = GMP + L-glutamate + AMP + diphosphate + 2 H(+). It functions in the pathway purine metabolism; GMP biosynthesis; GMP from XMP (L-Gln route): step 1/1. In terms of biological role, catalyzes the synthesis of GMP from XMP. This Methanoregula boonei (strain DSM 21154 / JCM 14090 / 6A8) protein is GMP synthase [glutamine-hydrolyzing] subunit A.